The sequence spans 328 residues: tRNA uridine(34) hydroxylase (328 aa).

Residues 130–224 form the Rhodanese domain; the sequence is LDEDTVVLDT…YGKDPEVQGE (95 aa). The Cysteine persulfide intermediate role is filled by C184.

It belongs to the TrhO family.

It carries out the reaction uridine(34) in tRNA + AH2 + O2 = 5-hydroxyuridine(34) in tRNA + A + H2O. Catalyzes oxygen-dependent 5-hydroxyuridine (ho5U) modification at position 34 in tRNAs. The sequence is that of tRNA uridine(34) hydroxylase from Streptococcus pyogenes serotype M3 (strain SSI-1).